Here is a 92-residue protein sequence, read N- to C-terminus: DNA-directed RNA polymerase subunit Rpo11 (92 aa).

This sequence belongs to the archaeal Rpo11/eukaryotic RPB11/RPC19 RNA polymerase subunit family. In terms of assembly, part of the 13-subunit RNA polymerase complex.

Its subcellular location is the cytoplasm. It carries out the reaction RNA(n) + a ribonucleoside 5'-triphosphate = RNA(n+1) + diphosphate. Functionally, DNA-dependent RNA polymerase (RNAP) catalyzes the transcription of DNA into RNA using the four ribonucleoside triphosphates as substrates. This is DNA-directed RNA polymerase subunit Rpo11 from Saccharolobus solfataricus (strain ATCC 35092 / DSM 1617 / JCM 11322 / P2) (Sulfolobus solfataricus).